The chain runs to 283 residues: Cyclin-C (283 aa).

Positions 20-151 (DLLKERQKDL…LLELMDCCLI (132 aa)) constitute a Cyclin N-terminal domain. The interval 252–283 (TILSKMPKPKPPPNSEGEQGPNGSQNSSYSQS) is disordered. Residues 272-283 (PNGSQNSSYSQS) show a composition bias toward polar residues. Phosphoserine is present on S275.

Belongs to the cyclin family. Cyclin C subfamily. In terms of assembly, component of the Mediator complex, which is composed of MED1, MED4, MED6, MED7, MED8, MED9, MED10, MED11, MED12, MED13, MED13L, MED14, MED15, MED16, MED17, MED18, MED19, MED20, MED21, MED22, MED23, MED24, MED25, MED26, MED27, MED29, MED30, MED31, CCNC, CDK8 and CDC2L6/CDK11. The MED12, MED13, CCNC and CDK8 subunits form a distinct module termed the CDK8 module. Mediator containing the CDK8 module is less active than Mediator lacking this module in supporting transcriptional activation. Individual preparations of the Mediator complex lacking one or more distinct subunits have been variously termed ARC, CRSP, DRIP, PC2, SMCC and TRAP. The cylin/CDK pair formed by CCNC/CDK8 also associates with the large subunit of RNA polymerase II.

It localises to the nucleus. Component of the Mediator complex, a coactivator involved in regulated gene transcription of nearly all RNA polymerase II-dependent genes. Mediator functions as a bridge to convey information from gene-specific regulatory proteins to the basal RNA polymerase II transcription machinery. Mediator is recruited to promoters by direct interactions with regulatory proteins and serves as a scaffold for the assembly of a functional preinitiation complex with RNA polymerase II and the general transcription factors. Binds to and activates cyclin-dependent kinase CDK8 that phosphorylates the CTD (C-terminal domain) of the large subunit of RNA polymerase II (RNAp II), which may inhibit the formation of a transcription initiation complex. The polypeptide is Cyclin-C (Ccnc) (Mus musculus (Mouse)).